A 371-amino-acid polypeptide reads, in one-letter code: MKIAVPKEIKNHEYRVALTPSGARELVGRGHDVIVQAAAGEGAGFSDADFEAAGARLEADVAKLWDDAELILKVKEPQAEEVARLSAGQTLFTYLHLAAEESLTKGLLDSGATCIAYETITAPEGGLPLLAPMSTVAGRMAVQAGAHSLEKAQGGAGILLPGVPGVAPARVTVIGGGVVGENAARMALGLGAEVTVLDKSIPRLETLDDRYQGRMKTVFSTADALEEAVRESDLIIGAVLVPGAAAPKLITRDMLSDMKPGSVLVDVAIDQGGCFETSKPTTHAEPTYVVDGVVHYCVANMPGAVARTSTQALTNATLPFVVALADKGWQKALADDDHFAAGLNVHDGKLTYRAVAEAFGLEYVEAASLIG.

Substrate is bound by residues Arg15 and Lys75. His96 functions as the Proton donor/acceptor in the catalytic mechanism. Residues Ser134, Asp198, Arg203, Ser220, 239–240, 267–270, Lys279, and 298–301 contribute to the NAD(+) site; these read VL, VAID, and VANM. The active-site Proton donor/acceptor is Asp270.

This sequence belongs to the AlaDH/PNT family. Mg(2+) is required as a cofactor.

It carries out the reaction L-alanine + NAD(+) + H2O = pyruvate + NH4(+) + NADH + H(+). It functions in the pathway amino-acid degradation; L-alanine degradation via dehydrogenase pathway; NH(3) and pyruvate from L-alanine: step 1/1. Functionally, catalyzes the reversible reductive amination of pyruvate to L-alanine. The chain is Alanine dehydrogenase from Halomonas elongata (strain ATCC 33173 / DSM 2581 / NBRC 15536 / NCIMB 2198 / 1H9).